Here is a 66-residue protein sequence, read N- to C-terminus: Large ribosomal subunit protein uL29 (66 aa).

It belongs to the universal ribosomal protein uL29 family.

This Chelativorans sp. (strain BNC1) protein is Large ribosomal subunit protein uL29.